We begin with the raw amino-acid sequence, 909 residues long: DNA mismatch repair protein MutS (909 aa).

Residues 275 to 290 (QKAERPPLSRPEREEQ) are compositionally biased toward basic and acidic residues. A disordered region spans residues 275 to 295 (QKAERPPLSRPEREEQGSTLF). 661 to 668 (GPNMGGKS) contacts ATP.

Belongs to the DNA mismatch repair MutS family.

Its function is as follows. This protein is involved in the repair of mismatches in DNA. It is possible that it carries out the mismatch recognition step. This protein has a weak ATPase activity. The chain is DNA mismatch repair protein MutS from Mesorhizobium japonicum (strain LMG 29417 / CECT 9101 / MAFF 303099) (Mesorhizobium loti (strain MAFF 303099)).